The primary structure comprises 149 residues: Large ribosomal subunit protein eL24A (149 aa).

Basic and acidic residues-rich tracts occupy residues 93–102 (KRNQRPEVRA) and 116–125 (KAASESEKKA). A disordered region spans residues 93-149 (KRNQRPEVRAAARAAALKQRKDKKAASESEKKAIKAKSAASSARGQAIKNAKAAARH).

This sequence belongs to the eukaryotic ribosomal protein eL24 family. As to quaternary structure, component of the large ribosomal subunit (LSU). Mature yeast ribosomes consist of a small (40S) and a large (60S) subunit. The 40S small subunit contains 1 molecule of ribosomal RNA (18S rRNA) and at least 33 different proteins. The large 60S subunit contains 3 rRNA molecules (25S, 5.8S and 5S rRNA) and at least 46 different proteins.

Its subcellular location is the cytoplasm. Component of the ribosome, a large ribonucleoprotein complex responsible for the synthesis of proteins in the cell. The small ribosomal subunit (SSU) binds messenger RNAs (mRNAs) and translates the encoded message by selecting cognate aminoacyl-transfer RNA (tRNA) molecules. The large subunit (LSU) contains the ribosomal catalytic site termed the peptidyl transferase center (PTC), which catalyzes the formation of peptide bonds, thereby polymerizing the amino acids delivered by tRNAs into a polypeptide chain. The nascent polypeptides leave the ribosome through a tunnel in the LSU and interact with protein factors that function in enzymatic processing, targeting, and the membrane insertion of nascent chains at the exit of the ribosomal tunnel. In Schizosaccharomyces pombe (strain 972 / ATCC 24843) (Fission yeast), this protein is Large ribosomal subunit protein eL24A (rpl2401).